We begin with the raw amino-acid sequence, 148 residues long: Large ribosomal subunit protein uL13 (148 aa).

It belongs to the universal ribosomal protein uL13 family. Part of the 50S ribosomal subunit.

Functionally, this protein is one of the early assembly proteins of the 50S ribosomal subunit, although it is not seen to bind rRNA by itself. It is important during the early stages of 50S assembly. This is Large ribosomal subunit protein uL13 from Ureaplasma parvum serovar 3 (strain ATCC 27815 / 27 / NCTC 11736).